Here is a 2266-residue protein sequence, read N- to C-terminus: Little elongation complex subunit 1 (2266 aa).

A coiled-coil region spans residues Cys-23–His-186. Disordered stretches follow at residues Gly-223 to Thr-259 and Pro-517 to Leu-540. A compositionally biased stretch (polar residues) spans Pro-250–Thr-259. Ser-255, Ser-533, Ser-558, and Ser-589 each carry phosphoserine. Residues Glu-591 to Gly-623 form a disordered region. A compositionally biased stretch (acidic residues) spans Pro-608–Asp-617. Phosphoserine is present on Ser-707. At Thr-832 the chain carries Phosphothreonine. Ser-925 carries the phosphoserine modification. The tract at residues Ser-925–Ser-955 is disordered. A compositionally biased stretch (polar residues) spans Pro-940–Ser-955. Position 958 is a phosphoserine (Ser-958). Disordered stretches follow at residues Val-977–Glu-1001 and Thr-1107–Leu-1133. The segment covering Gln-984–His-998 has biased composition (polar residues). Residue Lys-1218 is modified to N6-acetyllysine. Disordered regions lie at residues Thr-1295 to Leu-1372, Ala-1467 to Leu-1510, and Asn-1543 to Glu-1707. Polar residues-rich tracts occupy residues Arg-1306–Thr-1319, Glu-1328–Ser-1344, Asn-1487–Phe-1505, Asn-1565–Ser-1588, and Thr-1594–Leu-1605. Ser-1588 bears the Phosphoserine mark. Composition is skewed to low complexity over residues Asp-1609–Thr-1620 and Ala-1637–Pro-1671. Ser-1617 is modified (phosphoserine). At Thr-1642 the chain carries Phosphothreonine. Phosphoserine is present on residues Ser-1692, Ser-1697, Ser-1699, Ser-1701, Ser-1712, Ser-1838, and Ser-1854. A disordered region spans residues Thr-1809–Leu-1902. Positions Leu-1825 to Arg-1843 are enriched in polar residues. Over residues Cys-1889–Pro-1901 the composition is skewed to polar residues. The residue at position 1903 (Ser-1903) is a Phosphoserine.

It belongs to the ICE1 family. Component of the little elongation complex (LEC), at least composed of ELL (ELL, ELL2 or ELL3), ZC3H8, ICE1 and ICE2. Interacts (via N-terminus domain) with ELL. Interacts (via C-terminus domain) with ICE2 and ZC3H8.

It localises to the nucleus. It is found in the cajal body. Its function is as follows. Component of the little elongation complex (LEC), a complex required to regulate small nuclear RNA (snRNA) gene transcription by RNA polymerase II and III. Specifically acts as a scaffold protein that promotes the LEC complex formation and recruitment and RNA polymerase II occupancy at snRNA genes in subnuclear bodies. This is Little elongation complex subunit 1 (ICE1) from Homo sapiens (Human).